A 228-amino-acid chain; its full sequence is Octanoyltransferase (228 aa).

Residues 37-217 (AGGPDTLLLL…AVCDALDGRL (181 aa)) enclose the BPL/LPL catalytic domain. Substrate contacts are provided by residues 75-82 (RGGKITWH), 147-149 (AIG), and 160-162 (GFA). Cysteine 178 serves as the catalytic Acyl-thioester intermediate.

It belongs to the LipB family.

It is found in the cytoplasm. It catalyses the reaction octanoyl-[ACP] + L-lysyl-[protein] = N(6)-octanoyl-L-lysyl-[protein] + holo-[ACP] + H(+). It functions in the pathway protein modification; protein lipoylation via endogenous pathway; protein N(6)-(lipoyl)lysine from octanoyl-[acyl-carrier-protein]: step 1/2. Functionally, catalyzes the transfer of endogenously produced octanoic acid from octanoyl-acyl-carrier-protein onto the lipoyl domains of lipoate-dependent enzymes. Lipoyl-ACP can also act as a substrate although octanoyl-ACP is likely to be the physiological substrate. The protein is Octanoyltransferase of Mycolicibacterium smegmatis (strain ATCC 700084 / mc(2)155) (Mycobacterium smegmatis).